Here is a 60-residue protein sequence, read N- to C-terminus: Potassium channel toxin alpha-KTx 12.5 (60 aa).

A signal peptide spans 1 to 22; it reads MNKLPILIFMLLVCSMFISSDC. 3 disulfide bridges follow: cysteine 30/cysteine 51, cysteine 36/cysteine 56, and cysteine 40/cysteine 58.

This sequence belongs to the short scorpion toxin superfamily. Potassium channel inhibitor family. Alpha-KTx 12 subfamily. Expressed by the venom gland.

Its subcellular location is the secreted. In terms of biological role, this recombinant toxin inhibits the mammalian voltage-gated potassium channels Kv1.3/KCNA3 (IC(50)=28 nM). Kv1.1/KCNA1 and Kv1.2/KCNA2 potassium channels are also weakly inhibited (IC(50)=1.73 uM and IC(50)=12.63 uM, respectively). The sequence is that of Potassium channel toxin alpha-KTx 12.5 from Lychas mucronatus (Chinese swimming scorpion).